We begin with the raw amino-acid sequence, 431 residues long: MTKIANIKAREVLDSRGNPTVEADVILEDGTLGRACAPSGASTGSREALELRDGDASRYLGKGVRKAVEAINGQIRDALLGKDAADQRSLDQIMIDLDGTENKANLGANAILAVSLAAAKAAAVSLGKPLYEHIADVNGTSGKFSMPVPMMNILNGGEHADNNVDIQEFMVQPVSVNSFGEALRVGAEIFHSLKKVLKAQGLNTAVGDEGGFAPNLPSNEAALAAIKEAVEKAGYELGKDVTLALDCASSEFYKDGQYQLSGEGKSFDSEGFADYLSGLCDRYPIVSIEDGMDESDWDGWKVLTDKLGSKVQLVGDDLFVTNTKILKQGIEKGIGNSILIKFNQIGSLTETLDAIKMAQDAGYTAVISHRSGETEDTTIADLAVATCAGQIKTGSLCRSDRVAKYNQLLRIEEALEGKAPYRGLSEIKGQG.

Gln-167 is a binding site for (2R)-2-phosphoglycerate. The active-site Proton donor is the Glu-209. Residues Asp-246, Glu-289, and Asp-316 each contribute to the Mg(2+) site. Residues Lys-341, Arg-370, Ser-371, and Lys-392 each coordinate (2R)-2-phosphoglycerate. Catalysis depends on Lys-341, which acts as the Proton acceptor.

Belongs to the enolase family. In terms of assembly, component of the RNA degradosome, a multiprotein complex involved in RNA processing and mRNA degradation. The cofactor is Mg(2+).

The protein localises to the cytoplasm. Its subcellular location is the secreted. The protein resides in the cell surface. The catalysed reaction is (2R)-2-phosphoglycerate = phosphoenolpyruvate + H2O. It functions in the pathway carbohydrate degradation; glycolysis; pyruvate from D-glyceraldehyde 3-phosphate: step 4/5. Functionally, catalyzes the reversible conversion of 2-phosphoglycerate (2-PG) into phosphoenolpyruvate (PEP). It is essential for the degradation of carbohydrates via glycolysis. This is Enolase from Marinobacter nauticus (strain ATCC 700491 / DSM 11845 / VT8) (Marinobacter aquaeolei).